Here is a 354-residue protein sequence, read N- to C-terminus: Protein FAM181A (354 aa).

2 stretches are compositionally biased toward basic and acidic residues: residues 1–14 and 129–142; these read MPLE…ERND and YLKR…RRLL. Disordered regions lie at residues 1-35, 117-160, and 172-193; these read MPLE…KQVS, LPRG…CKEK, and AKEQ…VPMR.

This sequence belongs to the FAM181 family.

This chain is Protein FAM181A (FAM181A), found in Homo sapiens (Human).